The following is a 214-amino-acid chain: Auxin-binding protein ABP20 (214 aa).

Positions 1-23 are cleaved as a signal peptide; that stretch reads MPQATMIFPILFTFFLLLSSSNA. A disulfide bond links C29 and C44. In terms of domain architecture, Cupin type-1 spans 58–204; that stretch reads SGLGIAGNTS…TTFLDAAQIK (147 aa). N65 carries an N-linked (GlcNAc...) asparagine glycan. Mn(2+)-binding residues include H106, H108, E113, and H152.

This sequence belongs to the germin family. As to quaternary structure, interacts with ABP19.

It localises to the secreted. Its subcellular location is the extracellular space. The protein localises to the apoplast. The protein resides in the cell wall. In terms of biological role, probable receptor for the plant growth-promoting hormone auxin. The sequence is that of Auxin-binding protein ABP20 (ABP20) from Prunus persica (Peach).